The primary structure comprises 173 residues: Crossover junction endodeoxyribonuclease RuvC (173 aa).

Catalysis depends on residues Asp8, Glu67, and Asp139. Residues Asp8, Glu67, and Asp139 each coordinate Mg(2+).

Belongs to the RuvC family. In terms of assembly, homodimer which binds Holliday junction (HJ) DNA. The HJ becomes 2-fold symmetrical on binding to RuvC with unstacked arms; it has a different conformation from HJ DNA in complex with RuvA. In the full resolvosome a probable DNA-RuvA(4)-RuvB(12)-RuvC(2) complex forms which resolves the HJ. Mg(2+) is required as a cofactor.

It localises to the cytoplasm. It carries out the reaction Endonucleolytic cleavage at a junction such as a reciprocal single-stranded crossover between two homologous DNA duplexes (Holliday junction).. In terms of biological role, the RuvA-RuvB-RuvC complex processes Holliday junction (HJ) DNA during genetic recombination and DNA repair. Endonuclease that resolves HJ intermediates. Cleaves cruciform DNA by making single-stranded nicks across the HJ at symmetrical positions within the homologous arms, yielding a 5'-phosphate and a 3'-hydroxyl group; requires a central core of homology in the junction. The consensus cleavage sequence is 5'-(A/T)TT(C/G)-3'. Cleavage occurs on the 3'-side of the TT dinucleotide at the point of strand exchange. HJ branch migration catalyzed by RuvA-RuvB allows RuvC to scan DNA until it finds its consensus sequence, where it cleaves and resolves the cruciform DNA. The sequence is that of Crossover junction endodeoxyribonuclease RuvC from Shewanella woodyi (strain ATCC 51908 / MS32).